A 789-amino-acid polypeptide reads, in one-letter code: Probable Xaa-Pro aminopeptidase SNOG_02267 (789 aa).

Mn(2+) contacts are provided by D240, D251, E375, and E416. Disordered regions lie at residues 607–658 (SMSK…TGLA) and 670–704 (NHVSESPTPSQRRAGGCTPHWRGQNRADQSGDDAL). Polar residues predominate over residues 622–637 (VISQKQIRNRRSVSST). Residues 638 to 650 (ARHDLRGDRERPQ) are compositionally biased toward basic and acidic residues.

This sequence belongs to the peptidase M24B family. The cofactor is Mn(2+).

It catalyses the reaction Release of any N-terminal amino acid, including proline, that is linked to proline, even from a dipeptide or tripeptide.. In terms of biological role, catalyzes the removal of a penultimate prolyl residue from the N-termini of peptides. This chain is Probable Xaa-Pro aminopeptidase SNOG_02267, found in Phaeosphaeria nodorum (strain SN15 / ATCC MYA-4574 / FGSC 10173) (Glume blotch fungus).